Consider the following 200-residue polypeptide: Inner membrane-spanning protein YciB (200 aa).

The next 6 membrane-spanning stretches (helical) occupy residues 1–21 (MPPL…FFAN), 37–57 (IGAP…IALA), 66–86 (LAIM…LTLW), 103–123 (LFGG…GYVF), 136–156 (KLTL…EIVW), and 167–187 (FKVW…MPLI).

Belongs to the YciB family.

The protein localises to the cell inner membrane. Its function is as follows. Plays a role in cell envelope biogenesis, maintenance of cell envelope integrity and membrane homeostasis. This Brucella melitensis biotype 1 (strain ATCC 23456 / CCUG 17765 / NCTC 10094 / 16M) protein is Inner membrane-spanning protein YciB.